Reading from the N-terminus, the 880-residue chain is Alanine--tRNA ligase (880 aa).

The protein belongs to the class-II aminoacyl-tRNA synthetase family.

The protein localises to the cytoplasm. The catalysed reaction is tRNA(Ala) + L-alanine + ATP = L-alanyl-tRNA(Ala) + AMP + diphosphate. Catalyzes the attachment of alanine to tRNA(Ala) in a two-step reaction: alanine is first activated by ATP to form Ala-AMP and then transferred to the acceptor end of tRNA(Ala). Also edits incorrectly charged Ser-tRNA(Ala) and Gly-tRNA(Ala) via its editing domain. This is Alanine--tRNA ligase (alaS) from Lactiplantibacillus plantarum (strain ATCC BAA-793 / NCIMB 8826 / WCFS1) (Lactobacillus plantarum).